Reading from the N-terminus, the 360-residue chain is Peptide chain release factor 1 (360 aa).

Gln235 is subject to N5-methylglutamine. The interval 285-313 is disordered; it reads KRQQAEASTRRNLLGSGDRSDRNRTYNFP.

It belongs to the prokaryotic/mitochondrial release factor family. In terms of processing, methylated by PrmC. Methylation increases the termination efficiency of RF1.

It localises to the cytoplasm. Its function is as follows. Peptide chain release factor 1 directs the termination of translation in response to the peptide chain termination codons UAG and UAA. This Klebsiella pneumoniae (strain 342) protein is Peptide chain release factor 1.